A 150-amino-acid chain; its full sequence is Arginine repressor (150 aa).

It belongs to the ArgR family.

Its subcellular location is the cytoplasm. It participates in amino-acid biosynthesis; L-arginine biosynthesis [regulation]. Functionally, regulates arginine biosynthesis genes. The polypeptide is Arginine repressor (Ruminiclostridium cellulolyticum (strain ATCC 35319 / DSM 5812 / JCM 6584 / H10) (Clostridium cellulolyticum)).